The primary structure comprises 240 residues: UDP-2,3-diacylglucosamine hydrolase (240 aa).

Mn(2+) is bound by residues aspartate 8, histidine 10, aspartate 41, asparagine 79, and histidine 114. 79–80 is a binding site for substrate; it reads NR. Aspartate 122, serine 160, asparagine 164, lysine 167, and histidine 195 together coordinate substrate. Mn(2+)-binding residues include histidine 195 and histidine 197.

It belongs to the LpxH family. Mn(2+) is required as a cofactor.

Its subcellular location is the cell inner membrane. It carries out the reaction UDP-2-N,3-O-bis[(3R)-3-hydroxytetradecanoyl]-alpha-D-glucosamine + H2O = 2-N,3-O-bis[(3R)-3-hydroxytetradecanoyl]-alpha-D-glucosaminyl 1-phosphate + UMP + 2 H(+). It participates in glycolipid biosynthesis; lipid IV(A) biosynthesis; lipid IV(A) from (3R)-3-hydroxytetradecanoyl-[acyl-carrier-protein] and UDP-N-acetyl-alpha-D-glucosamine: step 4/6. Functionally, hydrolyzes the pyrophosphate bond of UDP-2,3-diacylglucosamine to yield 2,3-diacylglucosamine 1-phosphate (lipid X) and UMP by catalyzing the attack of water at the alpha-P atom. Involved in the biosynthesis of lipid A, a phosphorylated glycolipid that anchors the lipopolysaccharide to the outer membrane of the cell. This Escherichia coli O7:K1 (strain IAI39 / ExPEC) protein is UDP-2,3-diacylglucosamine hydrolase.